Consider the following 536-residue polypeptide: Chaperonin GroEL 2 (536 aa).

ATP-binding positions include 29–32, 86–90, Gly413, 476–478, and Asp492; these read TLGP, DGTTT, and NAA.

The protein belongs to the chaperonin (HSP60) family. Forms a cylinder of 14 subunits composed of two heptameric rings stacked back-to-back. Interacts with the co-chaperonin GroES.

It is found in the cytoplasm. The catalysed reaction is ATP + H2O + a folded polypeptide = ADP + phosphate + an unfolded polypeptide.. In terms of biological role, together with its co-chaperonin GroES, plays an essential role in assisting protein folding. The GroEL-GroES system forms a nano-cage that allows encapsulation of the non-native substrate proteins and provides a physical environment optimized to promote and accelerate protein folding. The chain is Chaperonin GroEL 2 from Moorella thermoacetica (strain ATCC 39073 / JCM 9320).